The chain runs to 382 residues: Cholinephosphotransferase 1 (382 aa).

The Cytoplasmic segment spans residues 1 to 51 (MPQCECPEPLSAVQLKRLEEHKYSAAGRSLFEPPCQIYWNWLVQQIPTWVA). A helical transmembrane segment spans residues 52–72 (PNTLTTIGLVINVITTVILVY). Residue asparagine 53 participates in CDP-choline binding. Over 73–82 (YSPTATEEVP) the chain is Lumenal. Residues 83–107 (GWAFFLSALGLFIYQSLDAIDGKQA) traverse the membrane as a helical segment. Mg(2+) contacts are provided by aspartate 100 and aspartate 103. Arginine 108 lines the CDP-choline pocket. The Cytoplasmic segment spans residues 108-114 (RRTNSSS). Residues 115–139 (ALGELFDHGCDAVSTVFVAVGTCIC) traverse the membrane as a helical segment. Aspartate 121 is a binding site for Mg(2+). Catalysis depends on histidine 122, which acts as the Proton acceptor. Position 125 (aspartate 125) interacts with Mg(2+). The Lumenal segment spans residues 140–149 (CGIGAYPNWM). A helical membrane pass occupies residues 150-168 (FFCGFVGMFMFFCAHWQTY). Topologically, residues 169–179 (VSGTLRFGLVD) are cytoplasmic. Residues 180 to 196 (VTEVQIAIIIMYLLTAF) form a helical membrane-spanning segment. The Lumenal segment spans residues 197–211 (TGVSFWEMRVPVLGV). Residues 212–237 (NLQTFPILGIIGGFLYSTYNYFFVIM) traverse the membrane as a helical segment. Residues 238–254 (NGGVGKNGSTVADTSVL) are Cytoplasmic-facing. The chain crosses the membrane as a helical span at residues 255 to 270 (TPGLHIGLILTLAFII). The Lumenal segment spans residues 271–282 (FKKSSSHLFEHH). Residues 283-305 (PCLYVLTFGMVIAKISNKLVVAH) form a helical membrane-spanning segment. Topologically, residues 306–318 (MTKSELHLQDTAF) are cytoplasmic. Residues 319 to 328 (IGPGLLFLNQ) traverse the membrane as a helical segment. Residues 329–335 (YFNSYID) are Lumenal-facing. The chain crosses the membrane as a helical span at residues 336–365 (EHIVLWIAMVLSLVDLVRYCTAVCLQIASH). Topologically, residues 366–382 (LRIRVFSISPQGHAHKD) are cytoplasmic.

The protein belongs to the CDP-alcohol phosphatidyltransferase class-I family. The cofactor is Mg(2+). Mn(2+) serves as cofactor.

The protein resides in the golgi apparatus membrane. The catalysed reaction is CDP-choline + a 1,2-diacyl-sn-glycerol = a 1,2-diacyl-sn-glycero-3-phosphocholine + CMP + H(+). The enzyme catalyses 1-octadecanoyl-2-(5Z,8Z,11Z,14Z-eicosatetraenoyl)-sn-glycerol + CDP-choline = 1-octadecanoyl-2-(5Z,8Z,11Z,14Z-eicosatetraenoyl)-sn-glycero-3-phosphocholine + CMP + H(+). It carries out the reaction 1-hexadecanoyl-2-(9Z-octadecenoyl)-sn-glycerol + CDP-choline = 1-hexadecanoyl-2-(9Z-octadecenoyl)-sn-glycero-3-phosphocholine + CMP + H(+). It catalyses the reaction 1-hexadecanoyl-2-(4Z,7Z,10Z,13Z,16Z,19Z-docosahexaenoyl)-sn-glycerol + CDP-choline = 1-hexadecanoyl-2-(4Z,7Z,10Z,13Z,16Z,19Z-docosahexaenoyl)-sn-glycero-3-phosphocholine + CMP + H(+). The catalysed reaction is 1,2-dioctanoyl-sn-glycerol + CDP-choline = 1,2-dioctanoyl-sn-glycero-3-phosphocholine + CMP + H(+). It functions in the pathway phospholipid metabolism; phosphatidylcholine biosynthesis; phosphatidylcholine from phosphocholine: step 2/2. Functionally, catalyzes the final step of de novo phosphatidylcholine (PC) synthesis, i.e. the transfer of choline phosphate from CDP-choline to the free hydroxyl of a diacylglycerol (DAG), producing a PC. It thereby plays a central role in the formation and maintenance of vesicular membranes. The polypeptide is Cholinephosphotransferase 1 (chpt1) (Danio rerio (Zebrafish)).